The following is a 333-amino-acid chain: Phosphate acyltransferase (333 aa).

It belongs to the PlsX family. As to quaternary structure, homodimer. Probably interacts with PlsY.

Its subcellular location is the cytoplasm. The enzyme catalyses a fatty acyl-[ACP] + phosphate = an acyl phosphate + holo-[ACP]. The protein operates within lipid metabolism; phospholipid metabolism. Its function is as follows. Catalyzes the reversible formation of acyl-phosphate (acyl-PO(4)) from acyl-[acyl-carrier-protein] (acyl-ACP). This enzyme utilizes acyl-ACP as fatty acyl donor, but not acyl-CoA. The protein is Phosphate acyltransferase of Aliarcobacter butzleri (strain RM4018) (Arcobacter butzleri).